A 121-amino-acid polypeptide reads, in one-letter code: Small ribosomal subunit protein uS13 (121 aa).

The tract at residues Arg93 to Lys121 is disordered.

Belongs to the universal ribosomal protein uS13 family. As to quaternary structure, part of the 30S ribosomal subunit. Forms a loose heterodimer with protein S19. Forms two bridges to the 50S subunit in the 70S ribosome.

Located at the top of the head of the 30S subunit, it contacts several helices of the 16S rRNA. In the 70S ribosome it contacts the 23S rRNA (bridge B1a) and protein L5 of the 50S subunit (bridge B1b), connecting the 2 subunits; these bridges are implicated in subunit movement. Contacts the tRNAs in the A and P-sites. The chain is Small ribosomal subunit protein uS13 from Albidiferax ferrireducens (strain ATCC BAA-621 / DSM 15236 / T118) (Rhodoferax ferrireducens).